The sequence spans 161 residues: Negative cofactor 2 complex subunit beta (161 aa).

A Histone-fold domain is found at 11–75 (SLPKATVQKM…IAAEHIIKAL (65 aa)). The span at 93–107 (EHKEQQKNREKKSSK) shows a compositional bias: basic and acidic residues. Disordered regions lie at residues 93-116 (EHKEQQKNREKKSSKFEQSGVSRD) and 130-161 (RERFKNQNIAHDNHTTTAIPVPTASETETKEN). Positions 135–147 (NQNIAHDNHTTTA) are enriched in polar residues.

Belongs to the NC2 beta/DR1 family.

It is found in the cytoplasm. The protein resides in the nucleus. This is Negative cofactor 2 complex subunit beta (ncb2) from Schizosaccharomyces pombe (strain 972 / ATCC 24843) (Fission yeast).